The following is a 174-amino-acid chain: dCTP deaminase, dUMP-forming (174 aa).

DCTP-binding positions include 93–98 (RSSIGR), aspartate 111, 119–121 (TLE), glutamine 138, and tyrosine 151. Glutamate 121 acts as the Proton donor/acceptor in catalysis.

It belongs to the dCTP deaminase family. Homotrimer.

The catalysed reaction is dCTP + 2 H2O = dUMP + NH4(+) + diphosphate. It participates in pyrimidine metabolism; dUMP biosynthesis; dUMP from dCTP: step 1/1. Its function is as follows. Bifunctional enzyme that catalyzes both the deamination of dCTP to dUTP and the hydrolysis of dUTP to dUMP without releasing the toxic dUTP intermediate. In Leptospira biflexa serovar Patoc (strain Patoc 1 / Ames), this protein is dCTP deaminase, dUMP-forming.